The sequence spans 308 residues: Homeobox-leucine zipper protein HOX2 (308 aa).

2 disordered regions span residues 15–36 and 71–117; these read QGSLTSSTTTTSSPGAGSSSPW and QGRA…RKKL. A compositionally biased stretch (low complexity) spans 74–88; sequence ASTSPDSAAALSSAS. Positions 112 to 171 form a DNA-binding region, homeobox; sequence GGRKKLRLSKDQAAVLEECFKTHSTLNPKQKVALANRLGLRPRQVEVWFQNRRARTKLKQ. Positions 170–214 are leucine-zipper; that stretch reads KQTEVDCEYLKRWCERLADENKRLEKELADLRALKAAPSPASASA.

The protein belongs to the HD-ZIP homeobox family. Class II subfamily. In terms of assembly, homodimer. May form a heterodimer with HOX1, HOX3 or HOX7. As to expression, expressed in seedlings, roots, leaves, nodes, internodes, flowers and embryo.

Its subcellular location is the nucleus. In terms of biological role, probable transcription factor that binds to the DNA sequence 5'-CAAT[GC]ATTG-3'. This chain is Homeobox-leucine zipper protein HOX2 (HOX2), found in Oryza sativa subsp. indica (Rice).